The chain runs to 630 residues: Sodium-dependent serotonin transporter (630 aa).

Topologically, residues 1-87 (METTALNSQK…ERETWGKKVD (87 aa)) are cytoplasmic. Tyrosine 47 carries the post-translational modification Phosphotyrosine. A helical membrane pass occupies residues 88 to 112 (FLLSVIGYAVDLGNIWRFPYVCYQN). Na(+) is bound by residues glycine 94, alanine 96, valine 97, aspartate 98, and asparagine 101. Residue aspartate 98 participates in serotonin binding. Topologically, residues 113–115 (GGG) are extracellular. A helical membrane pass occupies residues 116–135 (AFLLPYIIMAIFGGIPLFYM). At 136-160 (ELALGQYHRNGCISIWRKICPIFKG) the chain is on the cytoplasmic side. Tyrosine 142 bears the Phosphotyrosine mark. Residues 161 to 186 (IGYTICIIAFYIASYYNTIIAWALYY) traverse the membrane as a helical segment. The Extracellular segment spans residues 187 to 252 (LISSFTDRLP…KGLQDVGGVS (66 aa)). An intrachain disulfide couples cysteine 200 to cysteine 209. Asparagine 208 and asparagine 217 each carry an N-linked (GlcNAc...) asparagine glycan. Residues 253-271 (WQLTLCIMLIFTIIYFSIW) traverse the membrane as a helical segment. Over 272–277 (KGVKTS) the chain is Cytoplasmic. Threonine 276 carries the post-translational modification Phosphothreonine. The helical transmembrane segment at 278 to 297 (GKVVWVTATFPYIVLSVLLV) threads the bilayer. Over 298–324 (RGATLPGAWKGVLFYLKPNWQKLLETG) the chain is Extracellular. A helical membrane pass occupies residues 325-347 (VWIDAAAQIFFSLGPGFGVLLAF). Residue serine 336 coordinates Na(+). Over 348-360 (ASYNKFNNNCYQD) the chain is Cytoplasmic. Residues 361-380 (ALVTSAVNCMTSFVSGFVIF) form a helical membrane-spanning segment. Asparagine 368 is a binding site for Na(+). Over 381-421 (TVLGYMAEMRSEDVSEVAKDAGPSLLFITYAEAIANMPAST) the chain is Extracellular. A helical membrane pass occupies residues 422 to 443 (FFAIIFFLMLITLGLDSTFAGL). Na(+) contacts are provided by leucine 434, aspartate 437, and serine 438. A serotonin-binding site is contributed by threonine 439. Topologically, residues 444-463 (EGVITAVLDEFPHIWAKHRE) are cytoplasmic. Residues 464 to 483 (WFVLAVVITCFFGSLTTLTF) form a helical membrane-spanning segment. At 484 to 494 (GGAYVVKLLEE) the chain is on the extracellular side. Residues glutamate 494 and tyrosine 495 each coordinate serotonin. A helical transmembrane segment spans residues 495-516 (YATGPAVLTVVFIEAIAVSWFY). The Cytoplasmic segment spans residues 517 to 538 (GVTQFCSDVKEMLGFSPGWFWR). A helical membrane pass occupies residues 539 to 558 (ICWVAVSPVFLLFIICSFLM). The serotonin site is built by phenylalanine 556 and serine 559. At 559–574 (SPPQLRLFQYSYPHWS) the chain is on the extracellular side. The helical transmembrane segment at 575 to 595 (VILGYCIGTSSVICIPTYITY) threads the bilayer. Residues 596-630 (RLVTTPGTLKERIIKSITPETPTEIPCGDICLNAV) lie on the Cytoplasmic side of the membrane. Residues 616-624 (TPTEIPCGD) are interaction with RAB4A.

It belongs to the sodium:neurotransmitter symporter (SNF) (TC 2.A.22) family. SLC6A4 subfamily. Monomer or homooligomer. Interacts (via C-terminus) with SCAMP2; the interaction is direct and retains transporter molecules intracellularly. Interacts with filamentous actin and STX1A. Interacts (via the N-terminus) with STX1A (via the H3 domain); this interaction regulates SLC4A6 channel conductance. Interacts with SEC23A, SEC24C and PATJ. Interacts with NOS1; the interaction may diminish the cell surface localization of SERT in the brain and, correspondingly, reduce serotonin reuptake. Interacts with TGFB1I1. Interacts with ITGAV:ITGB3. Interacts (via C-terminus) with ITGB3; this interaction regulates SLC6A4 trafficking. In terms of processing, phosphorylation at Thr-276 increases 5-HT uptake and is required for cGMP-mediated SERT regulation. In terms of tissue distribution, expressed in the intestinal crypt epithelial cells (at protein level).

The protein resides in the cell membrane. The protein localises to the endomembrane system. Its subcellular location is the endosome membrane. It localises to the synapse. It is found in the cell junction. The protein resides in the focal adhesion. The protein localises to the cell projection. Its subcellular location is the neuron projection. It catalyses the reaction serotonin(out) + K(+)(in) + Na(+)(out) + H(+)(in) = serotonin(in) + K(+)(out) + Na(+)(in) + H(+)(out). Its function is as follows. Serotonin transporter that cotransports serotonin with one Na(+) ion in exchange for one K(+) ion and possibly one proton in an overall electroneutral transport cycle. Transports serotonin across the plasma membrane from the extracellular compartment to the cytosol thus limiting serotonin intercellular signaling. Essential for serotonin homeostasis in the central nervous system. In the developing somatosensory cortex, acts in glutamatergic neurons to control serotonin uptake and its trophic functions accounting for proper spatial organization of cortical neurons and elaboration of sensory circuits. In the mature cortex, acts primarily in brainstem raphe neurons to mediate serotonin uptake from the synaptic cleft back into the pre-synaptic terminal thus terminating serotonin signaling at the synapse. Modulates mucosal serotonin levels in the gastrointestinal tract through uptake and clearance of serotonin in enterocytes. Required for enteric neurogenesis and gastrointestinal reflexes. Regulates blood serotonin levels by ensuring rapid high affinity uptake of serotonin from plasma to platelets, where it is further stored in dense granules via vesicular monoamine transporters and then released upon stimulation. Mechanistically, the transport cycle starts with an outward-open conformation having Na1(+) and Cl(-) sites occupied. The binding of a second extracellular Na2(+) ion and serotonin substrate leads to structural changes to outward-occluded to inward-occluded to inward-open, where the Na2(+) ion and serotonin are released into the cytosol. Binding of intracellular K(+) ion induces conformational transitions to inward-occluded to outward-open and completes the cycle by releasing K(+) possibly together with a proton bound to Asp-98 into the extracellular compartment. Na1(+) and Cl(-) ions remain bound throughout the transport cycle. Additionally, displays serotonin-induced channel-like conductance for monovalent cations, mainly Na(+) ions. The channel activity is uncoupled from the transport cycle and may contribute to the membrane resting potential or excitability. This Cavia porcellus (Guinea pig) protein is Sodium-dependent serotonin transporter (SLC6A4).